The primary structure comprises 190 residues: Putative manganese efflux pump MntP (190 aa).

Transmembrane regions (helical) follow at residues 3–23, 37–57, 72–88, 111–131, 138–158, and 164–184; these read FLQI…CSVV, LVLA…GWVI, HWIA…KMIW, IILG…LAFV, VALS…WIGH, and FGKW…ANIV.

The protein belongs to the MntP (TC 9.B.29) family.

Its subcellular location is the cell membrane. Functionally, probably functions as a manganese efflux pump. The chain is Putative manganese efflux pump MntP from Corynebacterium glutamicum (strain R).